Here is a 152-residue protein sequence, read N- to C-terminus: Large ribosomal subunit protein bL9 (152 aa).

The protein belongs to the bacterial ribosomal protein bL9 family.

Binds to the 23S rRNA. The sequence is that of Large ribosomal subunit protein bL9 from Synechococcus sp. (strain CC9902).